A 525-amino-acid polypeptide reads, in one-letter code: GMP synthase [glutamine-hydrolyzing] (525 aa).

In terms of domain architecture, Glutamine amidotransferase type-1 spans 8 to 206 (PLLILDFGSQ…VVDICKASTD (199 aa)). The Nucleophile role is filled by Cys85. Residues His180 and Glu182 contribute to the active site. The region spanning 207–400 (WTPEHIIDEA…LGLPHDMVYR (194 aa)) is the GMPS ATP-PPase domain. 234–240 (SGGVDSS) provides a ligand contact to ATP.

As to quaternary structure, homodimer.

It catalyses the reaction XMP + L-glutamine + ATP + H2O = GMP + L-glutamate + AMP + diphosphate + 2 H(+). Its pathway is purine metabolism; GMP biosynthesis; GMP from XMP (L-Gln route): step 1/1. In terms of biological role, catalyzes the synthesis of GMP from XMP. This chain is GMP synthase [glutamine-hydrolyzing], found in Legionella pneumophila subsp. pneumophila (strain Philadelphia 1 / ATCC 33152 / DSM 7513).